A 138-amino-acid chain; its full sequence is Basic phospholipase A2 Drk-b1 (138 aa).

Positions 1–16 (MRTLWIVAMCLIGVEG) are cleaved as a signal peptide. Intrachain disulfides connect cysteine 42/cysteine 131, cysteine 44/cysteine 60, cysteine 59/cysteine 111, cysteine 65/cysteine 138, cysteine 66/cysteine 104, cysteine 73/cysteine 97, and cysteine 91/cysteine 102. Ca(2+) contacts are provided by tyrosine 43, glycine 45, and glycine 47. Histidine 63 is an active-site residue. Aspartate 64 serves as a coordination point for Ca(2+). The active site involves aspartate 105.

The cofactor is Ca(2+). In terms of tissue distribution, expressed by the venom gland.

Its subcellular location is the secreted. The enzyme catalyses a 1,2-diacyl-sn-glycero-3-phosphocholine + H2O = a 1-acyl-sn-glycero-3-phosphocholine + a fatty acid + H(+). Exhibits high hydrolytic activities and shows strong preference for the anionic micelles (dPPC with deoxycholate) to the zwitterionic micelles (dPPC with Triton X-100). PLA2 catalyzes the calcium-dependent hydrolysis of the 2-acyl groups in 3-sn-phosphoglycerides. The chain is Basic phospholipase A2 Drk-b1 from Daboia russelii (Russel's viper).